Reading from the N-terminus, the 348-residue chain is Dihydroorotase (348 aa).

Positions 17 and 19 each coordinate Zn(2+). Residues 19–21 (HLR) and Asn45 each bind substrate. 3 residues coordinate Zn(2+): Lys103, His140, and His178. Lys103 is subject to N6-carboxylysine. His140 is a substrate binding site. Leu223 serves as a coordination point for substrate. Asp251 serves as a coordination point for Zn(2+). Residue Asp251 is part of the active site. Positions 255 and 267 each coordinate substrate.

The protein belongs to the metallo-dependent hydrolases superfamily. DHOase family. Class II DHOase subfamily. Homodimer. It depends on Zn(2+) as a cofactor.

It catalyses the reaction (S)-dihydroorotate + H2O = N-carbamoyl-L-aspartate + H(+). The protein operates within pyrimidine metabolism; UMP biosynthesis via de novo pathway; (S)-dihydroorotate from bicarbonate: step 3/3. In terms of biological role, catalyzes the reversible cyclization of carbamoyl aspartate to dihydroorotate. The polypeptide is Dihydroorotase (Shigella boydii serotype 4 (strain Sb227)).